The chain runs to 84 residues: Small ribosomal subunit protein uS17 (84 aa).

The protein belongs to the universal ribosomal protein uS17 family. As to quaternary structure, part of the 30S ribosomal subunit.

Its function is as follows. One of the primary rRNA binding proteins, it binds specifically to the 5'-end of 16S ribosomal RNA. The polypeptide is Small ribosomal subunit protein uS17 (Sodalis glossinidius (strain morsitans)).